The sequence spans 80 residues: Large ribosomal subunit protein eL20 (80 aa).

The protein belongs to the eukaryotic ribosomal protein eL20 family. In terms of assembly, part of the 50S ribosomal subunit. Binds 23S rRNA.

This chain is Large ribosomal subunit protein eL20, found in Methanopyrus kandleri (strain AV19 / DSM 6324 / JCM 9639 / NBRC 100938).